The primary structure comprises 128 residues: LIM domain-containing protein 2 (128 aa).

Met1 carries the N-acetylmethionine modification. A disordered region spans residues 1-25 (MFQAAGAAQATPSHEAKGSSGNSTV). An LIM zinc-binding domain is found at 39–99 (ETCAACQKTV…KPHFQQLFKS (61 aa)). Zn(2+)-binding residues include Cys41, Cys44, His62, Cys65, Cys68, Cys71, Cys89, and His92.

Interacts with ILK.

The protein resides in the cytoplasm. The protein localises to the nucleus. Functionally, acts as an activator of the protein-kinase ILK, thereby regulating cell motility. The protein is LIM domain-containing protein 2 (Limd2) of Rattus norvegicus (Rat).